The primary structure comprises 1019 residues: UPF0182 protein Krad_1193 (1019 aa).

The next 7 helical transmembrane spans lie at 19-39 (GAAL…VVGA), 61-81 (LWLQ…AVAV), 115-135 (RLVV…VAMS), 169-189 (WLAF…IAGL), 213-233 (VHLA…YWLD), 264-284 (AILA…AVGT), and 291-311 (IGTG…PWAV). Disordered stretches follow at residues 897-934 (GNSG…ATGD) and 977-1019 (DAAS…TPTP). Residues 977–1005 (DAASAAEARLERSGTSGPTSSSSPSASSA) show a composition bias toward low complexity. Residues 1006–1019 (PPVPGETPAATPTP) are compositionally biased toward pro residues.

It belongs to the UPF0182 family.

The protein localises to the cell membrane. The chain is UPF0182 protein Krad_1193 from Kineococcus radiotolerans (strain ATCC BAA-149 / DSM 14245 / SRS30216).